The following is a 121-amino-acid chain: Large ribosomal subunit protein bL12 (121 aa).

It belongs to the bacterial ribosomal protein bL12 family. In terms of assembly, homodimer. Part of the ribosomal stalk of the 50S ribosomal subunit. Forms a multimeric L10(L12)X complex, where L10 forms an elongated spine to which 2 to 4 L12 dimers bind in a sequential fashion. Binds GTP-bound translation factors.

Its function is as follows. Forms part of the ribosomal stalk which helps the ribosome interact with GTP-bound translation factors. Is thus essential for accurate translation. This chain is Large ribosomal subunit protein bL12, found in Xanthomonas campestris pv. campestris (strain B100).